The sequence spans 187 residues: Bis(5'-nucleosyl)-tetraphosphatase, symmetrical (187 aa).

The HD domain occupies 18–132; the sequence is RYQHTIGVME…IFLADYIEPN (115 aa). His-21 contributes to the ADP binding site. Residues His-21, His-50, and Asp-51 each coordinate Fe cation. ADP is bound by residues 51–54, His-83, 109–110, Asp-127, Arg-133, and 170–175; these read DYAK, HT, and PIYPDT. Residue Asp-127 coordinates Fe cation.

The protein belongs to the Ap4A hydrolase YqeK family. Homodimer.

The catalysed reaction is P(1),P(4)-bis(5'-adenosyl) tetraphosphate + H2O = 2 ADP + 2 H(+). Hydrolyzes diadenosine 5',5'''-P1,P4-tetraphosphate (Ap4A) to yield ADP. In Halalkalibacterium halodurans (strain ATCC BAA-125 / DSM 18197 / FERM 7344 / JCM 9153 / C-125) (Bacillus halodurans), this protein is Bis(5'-nucleosyl)-tetraphosphatase, symmetrical.